Here is a 534-residue protein sequence, read N- to C-terminus: Protoheme IX farnesyltransferase (534 aa).

The unknown stretch occupies residues 1–251; the sequence is MRREHARAIL…VLLEGKPSLL (251 aa). The next 15 helical transmembrane spans lie at 17-37, 39-59, 83-103, 128-148, 163-183, 197-217, 261-281, 284-304, 339-359, 360-380, 384-404, 411-431, 457-477, 479-499, and 508-528; these read PWLL…GGIV, ALTG…ALAI, YLTL…FGAI, LALA…ALAV, VAWA…QVLL, LMHL…TTLA, GVIS…PAGI, LSLV…SHSI, IALG…LAAI, LALA…KRTS, IVIG…AVTG, LLLW…LALI, IVIY…LGML, WAYL…ALKL, and AWAL…AMAV. The interval 252-530 is protoheme IX prenyltransferase; the sequence is KDYISLTKPG…ILFVAMAVDR (279 aa).

This sequence in the C-terminal section; belongs to the UbiA prenyltransferase family. Protoheme IX farnesyltransferase subfamily.

Its subcellular location is the cell membrane. It catalyses the reaction heme b + (2E,6E)-farnesyl diphosphate + H2O = Fe(II)-heme o + diphosphate. The protein operates within porphyrin-containing compound metabolism; heme O biosynthesis; heme O from protoheme: step 1/1. Functionally, converts heme B (protoheme IX) to heme O by substitution of the vinyl group on carbon 2 of heme B porphyrin ring with a hydroxyethyl farnesyl side group. The chain is Protoheme IX farnesyltransferase (ctaB) from Roseiflexus sp. (strain RS-1).